Here is a 171-residue protein sequence, read N- to C-terminus: 3-hydroxydecanoyl-[acyl-carrier-protein] dehydratase (171 aa).

H70 is an active-site residue.

Belongs to the thioester dehydratase family. FabA subfamily. In terms of assembly, homodimer.

The protein localises to the cytoplasm. The catalysed reaction is a (3R)-hydroxyacyl-[ACP] = a (2E)-enoyl-[ACP] + H2O. The enzyme catalyses (3R)-hydroxydecanoyl-[ACP] = (2E)-decenoyl-[ACP] + H2O. It catalyses the reaction (2E)-decenoyl-[ACP] = (3Z)-decenoyl-[ACP]. It participates in lipid metabolism; fatty acid biosynthesis. Its function is as follows. Necessary for the introduction of cis unsaturation into fatty acids. Catalyzes the dehydration of (3R)-3-hydroxydecanoyl-ACP to E-(2)-decenoyl-ACP and then its isomerization to Z-(3)-decenoyl-ACP. Can catalyze the dehydratase reaction for beta-hydroxyacyl-ACPs with saturated chain lengths up to 16:0, being most active on intermediate chain length. The chain is 3-hydroxydecanoyl-[acyl-carrier-protein] dehydratase from Shewanella halifaxensis (strain HAW-EB4).